Reading from the N-terminus, the 142-residue chain is Small ribosomal subunit protein uS9 (142 aa).

This sequence belongs to the universal ribosomal protein uS9 family.

This Debaryomyces hansenii (strain ATCC 36239 / CBS 767 / BCRC 21394 / JCM 1990 / NBRC 0083 / IGC 2968) (Yeast) protein is Small ribosomal subunit protein uS9 (RPS16).